We begin with the raw amino-acid sequence, 136 residues long: ATP synthase epsilon chain, plastid (136 aa).

It belongs to the ATPase epsilon chain family. In terms of assembly, F-type ATPases have 2 components, CF(1) - the catalytic core - and CF(0) - the membrane proton channel. CF(1) has five subunits: alpha(3), beta(3), gamma(1), delta(1), epsilon(1). CF(0) has three main subunits: a, b and c.

Its subcellular location is the plastid thylakoid membrane. In terms of biological role, produces ATP from ADP in the presence of a proton gradient across the membrane. This Cuscuta reflexa (Southern Asian dodder) protein is ATP synthase epsilon chain, plastid.